The following is a 340-amino-acid chain: Glucokinase (340 aa).

ATP is bound at residue 17–22 (GDIGGT).

This sequence belongs to the bacterial glucokinase family.

The protein resides in the cytoplasm. It catalyses the reaction D-glucose + ATP = D-glucose 6-phosphate + ADP + H(+). The sequence is that of Glucokinase from Allorhizobium ampelinum (strain ATCC BAA-846 / DSM 112012 / S4) (Agrobacterium vitis (strain S4)).